Consider the following 87-residue polypeptide: Venom serine protease inhibitor (87 aa).

The first 23 residues, 1 to 23 (MPRLVLVSFLFLAIFSVFIGGFA), serve as a signal peptide directing secretion. Disulfide bonds link Cys-27/Cys-61, Cys-36/Cys-57, Cys-40/Cys-53, Cys-44/Cys-81, and Cys-63/Cys-75. One can recognise a TIL domain in the interval 27 to 81 (CPRNEIFTRCHAACQPSCARLARKPFCIKICKPGCICTSGYLRNKNNVCVPRSRC).

This sequence belongs to the serine protease inhibitor-like (TIL domain-containing) family. As to expression, specifically expressed by the venom gland.

It localises to the secreted. Antifibrinolytic and antimicrobial serine protease inhibitor. Inhibits trypsin, plasmin and microbial serine proteases but not chymotrypsin, thrombin and elastase. Inhibits the plasmin-mediated degradation of fibrin to fibrin degradation products. Also binds to bacterial and fungal surfaces and exhibits antimicrobial activity against fungi as well as Gram-positive and Gram-negative bacteria. In Apis cerana (Indian honeybee), this protein is Venom serine protease inhibitor.